A 150-amino-acid polypeptide reads, in one-letter code: Viral late gene transcription factor 2 (150 aa).

Belongs to the orthopoxvirus VLTF-2/OPG126 family. As to quaternary structure, interacts with the late transcription elongation factor VLTF-4/OPG110. Interacts with the late transcription factors VLTF-1/OPG093.

Its function is as follows. Acts with RNA polymerase to initiate transcription from late gene promoters. This is Viral late gene transcription factor 2 (OPG126) from Monkeypox virus.